The chain runs to 205 residues: Adenylyl-sulfate kinase (205 aa).

31-38 (GLSGAGKS) is an ATP binding site. Catalysis depends on Ser-105, which acts as the Phosphoserine intermediate.

The protein belongs to the APS kinase family.

The enzyme catalyses adenosine 5'-phosphosulfate + ATP = 3'-phosphoadenylyl sulfate + ADP + H(+). It functions in the pathway sulfur metabolism; hydrogen sulfide biosynthesis; sulfite from sulfate: step 2/3. Its function is as follows. Catalyzes the synthesis of activated sulfate. This chain is Adenylyl-sulfate kinase, found in Shewanella baltica (strain OS223).